The sequence spans 389 residues: tRNA-specific 2-thiouridylase MnmA (389 aa).

ATP-binding positions include 30 to 37 (GLSGGVDS) and Leu-56. The Nucleophile role is filled by Cys-117. Cys-117 and Cys-216 are joined by a disulfide. Gly-142 is an ATP binding site. The tract at residues 166-168 (KDQ) is interaction with tRNA. The active-site Cysteine persulfide intermediate is the Cys-216. Residues 321 to 322 (RY) are interaction with tRNA.

The protein belongs to the MnmA/TRMU family.

The protein resides in the cytoplasm. It catalyses the reaction S-sulfanyl-L-cysteinyl-[protein] + uridine(34) in tRNA + AH2 + ATP = 2-thiouridine(34) in tRNA + L-cysteinyl-[protein] + A + AMP + diphosphate + H(+). In terms of biological role, catalyzes the 2-thiolation of uridine at the wobble position (U34) of tRNA, leading to the formation of s(2)U34. This is tRNA-specific 2-thiouridylase MnmA from Synechococcus sp. (strain CC9902).